A 386-amino-acid polypeptide reads, in one-letter code: Succinate--CoA ligase [ADP-forming] subunit beta (386 aa).

An ATP-grasp domain is found at 9–244 (KEILRSFGVP…LDEEDPAEVE (236 aa)). Residues Lys46, 53-55 (GRG), Glu99, Ala102, and Glu107 each bind ATP. Residues Asn199 and Asp213 each contribute to the Mg(2+) site. Substrate-binding positions include Asn264 and 321-323 (GIM).

This sequence belongs to the succinate/malate CoA ligase beta subunit family. Heterotetramer of two alpha and two beta subunits. Requires Mg(2+) as cofactor.

The enzyme catalyses succinate + ATP + CoA = succinyl-CoA + ADP + phosphate. It carries out the reaction GTP + succinate + CoA = succinyl-CoA + GDP + phosphate. The protein operates within carbohydrate metabolism; tricarboxylic acid cycle; succinate from succinyl-CoA (ligase route): step 1/1. Succinyl-CoA synthetase functions in the citric acid cycle (TCA), coupling the hydrolysis of succinyl-CoA to the synthesis of either ATP or GTP and thus represents the only step of substrate-level phosphorylation in the TCA. The beta subunit provides nucleotide specificity of the enzyme and binds the substrate succinate, while the binding sites for coenzyme A and phosphate are found in the alpha subunit. The polypeptide is Succinate--CoA ligase [ADP-forming] subunit beta (Acidovorax ebreus (strain TPSY) (Diaphorobacter sp. (strain TPSY))).